A 497-amino-acid polypeptide reads, in one-letter code: Bifunctional protein GlmU (497 aa).

The interval 1-241 is pyrophosphorylase; it reads MSPETIGPAA…RWQVEGANDR (241 aa). Residues 14–17, lysine 28, glutamine 81, 86–87, 112–114, glycine 151, glutamate 166, asparagine 181, and asparagine 239 each bind UDP-N-acetyl-alpha-D-glucosamine; these read LAAG, GT, and YGD. Aspartate 114 contacts Mg(2+). Asparagine 239 is a Mg(2+) binding site. Residues 242 to 262 form a linker region; that stretch reads IQLSALAAEHNRRIIESWMRA. Residues 263-497 are N-acetyltransferase; the sequence is GVTVVDPATT…QATIEEGKQA (235 aa). Residues arginine 344 and lysine 362 each coordinate UDP-N-acetyl-alpha-D-glucosamine. The active-site Proton acceptor is histidine 374. Residues tyrosine 377 and asparagine 388 each coordinate UDP-N-acetyl-alpha-D-glucosamine. Residues 397–398, serine 416, and alanine 434 contribute to the acetyl-CoA site; that span reads NY.

This sequence in the N-terminal section; belongs to the N-acetylglucosamine-1-phosphate uridyltransferase family. In the C-terminal section; belongs to the transferase hexapeptide repeat family. Homotrimer. Mg(2+) serves as cofactor.

The protein resides in the cytoplasm. The enzyme catalyses alpha-D-glucosamine 1-phosphate + acetyl-CoA = N-acetyl-alpha-D-glucosamine 1-phosphate + CoA + H(+). It carries out the reaction N-acetyl-alpha-D-glucosamine 1-phosphate + UTP + H(+) = UDP-N-acetyl-alpha-D-glucosamine + diphosphate. Its pathway is nucleotide-sugar biosynthesis; UDP-N-acetyl-alpha-D-glucosamine biosynthesis; N-acetyl-alpha-D-glucosamine 1-phosphate from alpha-D-glucosamine 6-phosphate (route II): step 2/2. It participates in nucleotide-sugar biosynthesis; UDP-N-acetyl-alpha-D-glucosamine biosynthesis; UDP-N-acetyl-alpha-D-glucosamine from N-acetyl-alpha-D-glucosamine 1-phosphate: step 1/1. It functions in the pathway bacterial outer membrane biogenesis; LPS lipid A biosynthesis. Catalyzes the last two sequential reactions in the de novo biosynthetic pathway for UDP-N-acetylglucosamine (UDP-GlcNAc). The C-terminal domain catalyzes the transfer of acetyl group from acetyl coenzyme A to glucosamine-1-phosphate (GlcN-1-P) to produce N-acetylglucosamine-1-phosphate (GlcNAc-1-P), which is converted into UDP-GlcNAc by the transfer of uridine 5-monophosphate (from uridine 5-triphosphate), a reaction catalyzed by the N-terminal domain. The sequence is that of Bifunctional protein GlmU from Paenarthrobacter aurescens (strain TC1).